Consider the following 774-residue polypeptide: Lysyl oxidase homolog 2 (774 aa).

Residues 1–24 (MEGFLGFNHNHCFIVLFFVSLSLA) form the signal peptide. SRCR domains follow at residues 57-158 (LRLA…VVCS), 187-301 (IRPI…ASCV), 325-424 (VRLK…VRCN), and 434-543 (LRLV…VSCS). 9 disulfide bridges follow: Cys83-Cys147, Cys96-Cys157, Cys127-Cys137, Cys217-Cys290, Cys230-Cys300, Cys264-Cys274, Cys350-Cys413, Cys363-Cys423, and Cys394-Cys404. Asn287 carries N-linked (GlcNAc...) asparagine glycosylation. N-linked (GlcNAc...) asparagine glycosylation occurs at Asn454. 3 cysteine pairs are disulfide-bonded: Cys463–Cys529, Cys476–Cys542, and Cys510–Cys520. The lysyl-oxidase like stretch occupies residues 547 to 751 (PDLVLNAELV…MYNSVHNGAN (205 aa)). 2 residues coordinate Ca(2+): Asp548 and Leu549. Cystine bridges form between Cys572–Cys624, Cys578–Cys694, Cys656–Cys672, and Cys662–Cys684. The Cu cation site is built by His625, His627, and His629. Asn643 is a glycosylation site (N-linked (GlcNAc...) asparagine). The lysine tyrosylquinone (Lys-Tyr) cross-link spans 652 to 688 (KASFCLEDTECEADVQKQYECANFGEQGITVGCWDVY). 2',4',5'-topaquinone is present on Tyr688. The Ca(2+) site is built by Glu721, Asp723, Asn726, and Asn727.

Belongs to the lysyl oxidase family. Cu cation serves as cofactor. Lysine tyrosylquinone residue is required as a cofactor. In terms of processing, the lysine tyrosylquinone cross-link (LTQ) is generated by condensation of the epsilon-amino group of a lysine with a topaquinone produced by oxidation of tyrosine.

It localises to the secreted. Its subcellular location is the extracellular space. The protein resides in the extracellular matrix. The protein localises to the basement membrane. It is found in the nucleus. It localises to the chromosome. Its subcellular location is the endoplasmic reticulum. It carries out the reaction L-lysyl-[protein] + O2 + H2O = (S)-2-amino-6-oxohexanoyl-[protein] + H2O2 + NH4(+). In terms of biological role, mediates the post-translational oxidative deamination of lysine residues on target proteins leading to the formation of deaminated lysine (allysine). Acts as a transcription corepressor and specifically mediates deamination of trimethylated 'Lys-4' of histone H3 (H3K4me3), a specific tag for epigenetic transcriptional activation. Shows no activity against histone H3 when it is trimethylated on 'Lys-9' (H3K9me3) or 'Lys-27' (H3K27me3) or when 'Lys-4' is monomethylated (H3K4me1) or dimethylated (H3K4me2). Also mediates deamination of methylated TAF10, a member of the transcription factor IID (TFIID) complex, which induces release of TAF10 from promoters, leading to inhibition of TFIID-dependent transcription. LOXL2-mediated deamination of TAF10 results in transcriptional repression of genes required for embryonic stem cell pluripotency including POU5F1/OCT4, NANOG, KLF4 and SOX2. Involved in epithelial to mesenchymal transition (EMT) via interaction with SNAI1 and participates in repression of E-cadherin CDH1, probably by mediating deamination of histone H3. During EMT, involved with SNAI1 in negatively regulating pericentromeric heterochromatin transcription. SNAI1 recruits LOXL2 to pericentromeric regions to oxidize histone H3 and repress transcription which leads to release of heterochromatin component CBX5/HP1A, enabling chromatin reorganization and acquisition of mesenchymal traits. Interacts with the endoplasmic reticulum protein HSPA5 which activates the IRE1-XBP1 pathway of the unfolded protein response, leading to expression of several transcription factors involved in EMT and subsequent EMT induction. When secreted into the extracellular matrix, promotes cross-linking of extracellular matrix proteins by mediating oxidative deamination of peptidyl lysine residues in precursors to fibrous collagen and elastin. Acts as a regulator of sprouting angiogenesis, probably via collagen IV scaffolding. Acts as a regulator of chondrocyte differentiation, probably by regulating expression of factors that control chondrocyte differentiation. This is Lysyl oxidase homolog 2 (LOXL2) from Gallus gallus (Chicken).